We begin with the raw amino-acid sequence, 491 residues long: CRM-domain containing factor CFM9, mitochondrial (491 aa).

Residues 1-25 (MNQVFKGWSRGMSTSRGRSMRSKVE) constitute a mitochondrion transit peptide. The segment at 1-34 (MNQVFKGWSRGMSTSRGRSMRSKVESRMRKESGK) is disordered. A compositionally biased stretch (basic and acidic residues) spans 22–34 (SKVESRMRKESGK). In terms of domain architecture, CRM spans 90 to 187 (ELFTSEQVQA…RNYRQPKNLI (98 aa)). The span at 255-265 (PYVFHGDKQSE) shows a compositional bias: basic and acidic residues. 2 disordered regions span residues 255-287 (PYVFHGDKQSERGTSVDNREESEPGDEDSDQEE) and 328-491 (RSRT…WDSD). Positions 277–287 (EPGDEDSDQEE) are enriched in acidic residues. A compositionally biased stretch (basic and acidic residues) spans 345–359 (RRNDRDTHSQRRPND). The span at 360–375 (SDDDDDDGELDSEDDE) shows a compositional bias: acidic residues. The segment covering 392 to 416 (RPREDFKRRSPDPRPRPRAQVRSDD) has biased composition (basic and acidic residues). Residues 453–478 (TVSASSSKQSRFRNNSSRDGINNSKS) show a composition bias toward polar residues.

As to expression, highly expressed in roots and meristemic regions of young seedlings. Expressed at low levels in stems, trichomes and stigma.

Its subcellular location is the mitochondrion. Functionally, involved in the splicing of group II introns in mitochondria. Required for the splicing of mitochondrial introns found in nad1, nad2, nad4, nad5, nad7, rps3 and cox2 genes. Splicing of mitochondrial introns is crucial for mitochondrial biogenesis and function, plant growth and development, and plant response to abiotic stresses. The chain is CRM-domain containing factor CFM9, mitochondrial from Arabidopsis thaliana (Mouse-ear cress).